The sequence spans 247 residues: Coproheme decarboxylase (247 aa).

Residues arginine 129, 143-147 (YPMDK), histidine 170, glutamine 183, and serine 221 contribute to the Fe-coproporphyrin III site. Tyrosine 143 is a catalytic residue.

It belongs to the ChdC family. Type 1 subfamily. Fe-coproporphyrin III is required as a cofactor.

The catalysed reaction is Fe-coproporphyrin III + 2 H2O2 + 2 H(+) = heme b + 2 CO2 + 4 H2O. It carries out the reaction Fe-coproporphyrin III + H2O2 + H(+) = harderoheme III + CO2 + 2 H2O. It catalyses the reaction harderoheme III + H2O2 + H(+) = heme b + CO2 + 2 H2O. The protein operates within porphyrin-containing compound metabolism; protoheme biosynthesis. Involved in coproporphyrin-dependent heme b biosynthesis. Catalyzes the decarboxylation of Fe-coproporphyrin III (coproheme) to heme b (protoheme IX), the last step of the pathway. The reaction occurs in a stepwise manner with a three-propionate intermediate. The chain is Coproheme decarboxylase from Bacillus cereus (strain ATCC 10987 / NRS 248).